Here is a 943-residue protein sequence, read N- to C-terminus: Translation initiation factor IF-2 (943 aa).

Positions Val-99 to Gln-113 are enriched in low complexity. Residues Val-99–Ala-354 form a disordered region. Residues Asp-117–Lys-141 show a composition bias toward basic and acidic residues. Residues Ala-145–Thr-172 show a composition bias toward low complexity. Residues Lys-173–Lys-197 are compositionally biased toward basic and acidic residues. Over residues Lys-200–Glu-215 the composition is skewed to low complexity. Positions Gln-216 to Met-250 are enriched in basic and acidic residues. Residues Lys-251–Ala-264 show a composition bias toward low complexity. Composition is skewed to basic and acidic residues over residues Ala-295–Gln-308 and Gly-319–Arg-335. Residues Pro-443–Thr-612 form the tr-type G domain. A G1 region spans residues Gly-452 to Thr-459. Residue Gly-452–Thr-459 participates in GTP binding. The interval Gly-477–His-481 is G2. Positions Asp-498–Gly-501 are G3. GTP-binding positions include Asp-498–His-502 and Asn-552–Asp-555. Positions Asn-552–Asp-555 are G4. The segment at Ser-588–Lys-590 is G5.

The protein belongs to the TRAFAC class translation factor GTPase superfamily. Classic translation factor GTPase family. IF-2 subfamily.

It is found in the cytoplasm. Its function is as follows. One of the essential components for the initiation of protein synthesis. Protects formylmethionyl-tRNA from spontaneous hydrolysis and promotes its binding to the 30S ribosomal subunits. Also involved in the hydrolysis of GTP during the formation of the 70S ribosomal complex. This Neisseria gonorrhoeae (strain ATCC 700825 / FA 1090) protein is Translation initiation factor IF-2.